The sequence spans 108 residues: uncharacterized protein (108 aa).

This is an uncharacterized protein from Bacillus subtilis (strain 168).